A 368-amino-acid chain; its full sequence is Quinolinate synthase (368 aa).

2 residues coordinate iminosuccinate: His-46 and Ser-63. Cys-110 is a [4Fe-4S] cluster binding site. Iminosuccinate-binding positions include 141–143 (YVN) and Ser-162. Cys-230 is a [4Fe-4S] cluster binding site. Residues 256–258 (HPE) and Thr-273 contribute to the iminosuccinate site. Cys-320 contributes to the [4Fe-4S] cluster binding site.

The protein belongs to the quinolinate synthase family. Type 3 subfamily. Requires [4Fe-4S] cluster as cofactor.

It localises to the cytoplasm. It carries out the reaction iminosuccinate + dihydroxyacetone phosphate = quinolinate + phosphate + 2 H2O + H(+). It functions in the pathway cofactor biosynthesis; NAD(+) biosynthesis; quinolinate from iminoaspartate: step 1/1. Catalyzes the condensation of iminoaspartate with dihydroxyacetone phosphate to form quinolinate. This Bacillus cereus (strain Q1) protein is Quinolinate synthase.